Consider the following 199-residue polypeptide: Inosine triphosphate pyrophosphatase (199 aa).

Residue 12–17 participates in ITP binding; the sequence is TGNAKK. Glutamate 42 is a binding site for Mg(2+). Residues lysine 54, 70–71, lysine 87, 146–149, lysine 169, and 174–175 each bind ITP; these read DT, FGWD, and HR.

This sequence belongs to the HAM1 NTPase family. Homodimer. It depends on Mg(2+) as a cofactor. Requires Mn(2+) as cofactor.

It is found in the cytoplasm. The catalysed reaction is ITP + H2O = IMP + diphosphate + H(+). It catalyses the reaction dITP + H2O = dIMP + diphosphate + H(+). The enzyme catalyses XTP + H2O = XMP + diphosphate + H(+). In terms of biological role, pyrophosphatase that hydrolyzes non-canonical purine nucleotides such as inosine triphosphate (ITP), deoxyinosine triphosphate (dITP) or xanthosine 5'-triphosphate (XTP) to their respective monophosphate derivatives. The enzyme does not distinguish between the deoxy- and ribose forms. Probably excludes non-canonical purines from RNA and DNA precursor pools, thus preventing their incorporation into RNA and DNA and avoiding chromosomal lesions. The sequence is that of Inosine triphosphate pyrophosphatase from Monosiga brevicollis (Choanoflagellate).